Here is a 250-residue protein sequence, read N- to C-terminus: Probable transcriptional regulatory protein Emin_1151 (250 aa).

This sequence belongs to the TACO1 family.

It is found in the cytoplasm. This chain is Probable transcriptional regulatory protein Emin_1151, found in Elusimicrobium minutum (strain Pei191).